The following is a 154-amino-acid chain: uncharacterized protein (154 aa).

The signal sequence occupies residues 1 to 33 (MTKRGIQAFAGGIILATAVLAAVFYLTDEDQAA).

This is an uncharacterized protein from Bacillus subtilis (strain 168).